We begin with the raw amino-acid sequence, 353 residues long: Guanine nucleotide-binding protein alpha-3 subunit (353 aa).

A lipid anchor (N-myristoyl glycine) is attached at Gly-2. A lipid anchor (S-palmitoyl cysteine) is attached at Cys-4. The 322-residue stretch at 32–353 (KVVKLLLLGA…IQANLQGCGL (322 aa)) folds into the G-alpha domain. Positions 35 to 48 (KLLLLGAGECGKST) are G1 motif. Residues 40-47 (GAGECGKS), 176-182 (LLSRIKT), 201-205 (DVGGQ), 270-273 (NKKD), and Ala-326 each bind GTP. The Mg(2+) site is built by Ser-47 and Thr-182. The interval 174–182 (DILLSRIKT) is G2 motif. The interval 197 to 206 (FRVFDVGGQR) is G3 motif. The G4 motif stretch occupies residues 266–273 (ILFLNKKD). The G5 motif stretch occupies residues 324-329 (TCATDT).

It belongs to the G-alpha family. G(q) subfamily. As to quaternary structure, g proteins are composed of 3 units; alpha, beta and gamma. The alpha chain contains the guanine nucleotide binding site.

Functionally, guanine nucleotide-binding proteins (G proteins) are involved as modulators or transducers in various transmembrane signaling systems. Promotes transcription of 3',5'-cyclic phosphodiesterases pde-1 and pde-5, leading to reduced cGMP levels in sensory neurons. This causes suppression of insulin production and signaling which leads to increased daf-16 activity and contributes to increased adult lifespan and resistance to oxidative stress. In addition, by reducing cGMP levels, inhibits TGF-beta signaling pathways. Involved in behavioral response to P.aeruginosa by controlling the expression of daf-7, a member of the TGF-beta family, in ASJ sensory neurons. Plays a role in the avoidance response to the noxious chemical quinine in ASH sensory neurons. This chain is Guanine nucleotide-binding protein alpha-3 subunit, found in Caenorhabditis elegans.